Reading from the N-terminus, the 528-residue chain is Phosphoenolpyruvate carboxykinase (ATP) (528 aa).

The substrate site is built by R56, Y192, and K198. Residues K198, H217, and 233–241 (GLSGTGKTT) contribute to the ATP site. K198 and H217 together coordinate Mn(2+). D254 contributes to the Mn(2+) binding site. The ATP site is built by E282, R319, and T444. R319 serves as a coordination point for substrate.

Belongs to the phosphoenolpyruvate carboxykinase (ATP) family. Mn(2+) is required as a cofactor.

It localises to the cytoplasm. The enzyme catalyses oxaloacetate + ATP = phosphoenolpyruvate + ADP + CO2. It functions in the pathway carbohydrate biosynthesis; gluconeogenesis. Involved in the gluconeogenesis. Catalyzes the conversion of oxaloacetate (OAA) to phosphoenolpyruvate (PEP) through direct phosphoryl transfer between the nucleoside triphosphate and OAA. This chain is Phosphoenolpyruvate carboxykinase (ATP), found in Geobacillus kaustophilus (strain HTA426).